Consider the following 476-residue polypeptide: Aspartyl/glutamyl-tRNA(Asn/Gln) amidotransferase subunit B (476 aa).

This sequence belongs to the GatB/GatE family. GatB subfamily. In terms of assembly, heterotrimer of A, B and C subunits.

It carries out the reaction L-glutamyl-tRNA(Gln) + L-glutamine + ATP + H2O = L-glutaminyl-tRNA(Gln) + L-glutamate + ADP + phosphate + H(+). It catalyses the reaction L-aspartyl-tRNA(Asn) + L-glutamine + ATP + H2O = L-asparaginyl-tRNA(Asn) + L-glutamate + ADP + phosphate + 2 H(+). Its function is as follows. Allows the formation of correctly charged Asn-tRNA(Asn) or Gln-tRNA(Gln) through the transamidation of misacylated Asp-tRNA(Asn) or Glu-tRNA(Gln) in organisms which lack either or both of asparaginyl-tRNA or glutaminyl-tRNA synthetases. The reaction takes place in the presence of glutamine and ATP through an activated phospho-Asp-tRNA(Asn) or phospho-Glu-tRNA(Gln). In Listeria welshimeri serovar 6b (strain ATCC 35897 / DSM 20650 / CCUG 15529 / CIP 8149 / NCTC 11857 / SLCC 5334 / V8), this protein is Aspartyl/glutamyl-tRNA(Asn/Gln) amidotransferase subunit B.